A 151-amino-acid polypeptide reads, in one-letter code: Ribosome maturation factor RimP (151 aa).

It belongs to the RimP family.

It is found in the cytoplasm. In terms of biological role, required for maturation of 30S ribosomal subunits. The chain is Ribosome maturation factor RimP from Shewanella sp. (strain MR-4).